Reading from the N-terminus, the 840-residue chain is Axin-2 (840 aa).

Residues 1-75 (MSSAVLVTLL…EGRASPDSPL (75 aa)) form a disordered region. Positions 21-30 (APRPPVPGEE) match the Tankyrase-binding motif motif. Over residues 42 to 55 (KVQSTKPMPVSSNA) the composition is skewed to polar residues. A compositionally biased stretch (basic and acidic residues) spans 56 to 69 (RRNEDGLGEPEGRA). One can recognise an RGS domain in the interval 81 to 200 (SLHSLLGDQD…LTSDIYLEYV (120 aa)). Disordered stretches follow at residues 300–363 (SELS…KEMT), 398–435 (IRED…EEDP), 447–485 (LKTP…LLPT), 572–614 (RGGT…GDRS), and 715–745 (ASQQ…EDHK). Positions 303-318 (SSDALTDDSMSMTDSS) are enriched in low complexity. Residues 327–413 (MGSKKQLQRE…KEGSEQALSS (87 aa)) are interaction with GSK3B. Positions 413-478 (SRDGAPVQHP…HHHQHHHHQQ (66 aa)) are interaction with beta-catenin. Over residues 468–478 (DHHHQHHHHQQ) the composition is skewed to basic residues. The DIX domain occupies 758 to 840 (ASELVVTYFF…RILGKVERID (83 aa)).

Interacts with glycogen synthase kinase-3 beta (GSK3B) and beta-catenin. The interaction between axin and beta-catenin occurs via the armadillo repeats contained in beta-catenin. Interacts with SMAD7 and RNF111. Interacts with ANKRD6. Interacts with SIAH1. Interacts with SIAH2. In terms of processing, ADP-ribosylated by tankyrase TNKS and TNKS2. Poly-ADP-ribosylated protein is recognized by RNF146, followed by ubiquitination and subsequent activation of the Wnt signaling pathway. Post-translationally, ubiquitinated by RNF146 when poly-ADP-ribosylated, leading to its degradation and subsequent activation of the Wnt signaling pathway. Deubiquitinated by USP34, deubiquitinated downstream of beta-catenin stabilization step: deubiquitination is important Wnt signaling to positively regulate beta-catenin (CTNBB1)-mediated transcription. Probably phosphorylated by GSK3B and dephosphorylated by PP2A. Expressed in Tcf7-positive innate-like T-cells (at protein level).

It localises to the cytoplasm. Its function is as follows. Inhibitor of the Wnt signaling pathway. Down-regulates beta-catenin. Probably facilitate the phosphorylation of beta-catenin and APC by GSK3B. The sequence is that of Axin-2 from Mus musculus (Mouse).